We begin with the raw amino-acid sequence, 87 residues long: MPNIASASKRLRQNEVRNLYNRKIKSFLNTQKKKVIKAVDSNDKNLASEEFKKYASALDKAARKSVIHANRAAAKKSDMMKKINAMN.

The protein belongs to the bacterial ribosomal protein bS20 family.

Its function is as follows. Binds directly to 16S ribosomal RNA. This Brachyspira hyodysenteriae (strain ATCC 49526 / WA1) protein is Small ribosomal subunit protein bS20.